Reading from the N-terminus, the 562-residue chain is F-box and WD repeat domain-containing 11-A (562 aa).

Residues 87 to 136 (GSFDKEKDLCIQLFDQWSESDQVEFVEHLIARMCHYQHGHINSYLKPMLQ) form a homodimerization domain D region. In terms of domain architecture, F-box spans 149–187 (DHIAENILSFLDARSLCSAELVCREWQRVISDGMLWKKL). 7 WD repeats span residues 256-295 (RSEN…CLKV), 296-335 (LTGH…VLNT), 336-375 (LIHH…DISL), 379-418 (LVGH…FVRT), 419-458 (LNGH…CLRV), 459-491 (LEGH…WDLQ), and 508-538 (LVEH…LIWD).

Self-associates. Component of the SCF(FBXW11) complex.

The protein localises to the cytoplasm. The protein resides in the nucleus. The protein operates within protein modification; protein ubiquitination. Substrate recognition component of a SCF (SKP1-CUL1-F-box protein) E3 ubiquitin-protein ligase complex which mediates the ubiquitination and subsequent proteasomal degradation of target proteins. Probably recognizes and binds to phosphorylated target proteins: the interaction with substrates requires the phosphorylation of the two serine residues in the substrates' destruction motif D-S-G-X(2,3,4)-S. SCF(FBXW11) mediates the ubiquitination of phosphorylated CTNNB1 and participates in Wnt signaling regulation. Participates in Wnt signaling regulation, and plays a role in eye and jaw development. SCF(FBXW11) plays a key role in NF-kappa-B activation by mediating ubiquitination of phosphorylated NFKBIA, leading to its degradation by the proteasome, thereby allowing the associated NF-kappa-B complex to translocate into the nucleus and to activate transcription. In Danio rerio (Zebrafish), this protein is F-box and WD repeat domain-containing 11-A.